Consider the following 633-residue polypeptide: DNA topoisomerase 4 subunit B (633 aa).

Residues Tyr5, Asn45, Asp72, 113-119 (GLHGVGA), and Lys337 contribute to the ATP site. The Toprim domain occupies 419-534 (KELFIVEGDS…LGHVYLALPP (116 aa)). Glu425, Asp499, and Asp501 together coordinate Mg(2+).

The protein belongs to the type II topoisomerase family. ParE type 2 subfamily. Heterotetramer composed of ParC and ParE. Requires Mg(2+) as cofactor. Mn(2+) is required as a cofactor. It depends on Ca(2+) as a cofactor.

It catalyses the reaction ATP-dependent breakage, passage and rejoining of double-stranded DNA.. Topoisomerase IV is essential for chromosome segregation. It relaxes supercoiled DNA. Performs the decatenation events required during the replication of a circular DNA molecule. The polypeptide is DNA topoisomerase 4 subunit B (Mycoplasma genitalium (strain ATCC 33530 / DSM 19775 / NCTC 10195 / G37) (Mycoplasmoides genitalium)).